Reading from the N-terminus, the 738-residue chain is Catalase-peroxidase 2 (738 aa).

The signal sequence occupies residues Met-1 to Ala-26. Positions Trp-104 to Tyr-226 form a cross-link, tryptophyl-tyrosyl-methioninium (Trp-Tyr) (with M-252). Residue His-105 is the Proton acceptor of the active site. Positions Tyr-226–Met-252 form a cross-link, tryptophyl-tyrosyl-methioninium (Tyr-Met) (with W-104). A heme b-binding site is contributed by His-267.

The protein belongs to the peroxidase family. Peroxidase/catalase subfamily. Homodimer or homotetramer. Requires heme b as cofactor. In terms of processing, formation of the three residue Trp-Tyr-Met cross-link is important for the catalase, but not the peroxidase activity of the enzyme.

It catalyses the reaction H2O2 + AH2 = A + 2 H2O. The catalysed reaction is 2 H2O2 = O2 + 2 H2O. Bifunctional enzyme with both catalase and broad-spectrum peroxidase activity. In Shewanella amazonensis (strain ATCC BAA-1098 / SB2B), this protein is Catalase-peroxidase 2.